Here is a 346-residue protein sequence, read N- to C-terminus: Histidinol-phosphate aminotransferase (346 aa).

Lys209 carries the N6-(pyridoxal phosphate)lysine modification.

This sequence belongs to the class-II pyridoxal-phosphate-dependent aminotransferase family. Histidinol-phosphate aminotransferase subfamily. Homodimer. Requires pyridoxal 5'-phosphate as cofactor.

It carries out the reaction L-histidinol phosphate + 2-oxoglutarate = 3-(imidazol-4-yl)-2-oxopropyl phosphate + L-glutamate. Its pathway is amino-acid biosynthesis; L-histidine biosynthesis; L-histidine from 5-phospho-alpha-D-ribose 1-diphosphate: step 7/9. This chain is Histidinol-phosphate aminotransferase, found in Vibrio parahaemolyticus serotype O3:K6 (strain RIMD 2210633).